We begin with the raw amino-acid sequence, 404 residues long: Cysteine desulfurase IscS (404 aa).

Pyridoxal 5'-phosphate is bound by residues 75 to 76 (AT), Asn-155, Gln-183, and 203 to 205 (SGH). Position 206 is an N6-(pyridoxal phosphate)lysine (Lys-206). Thr-243 is a pyridoxal 5'-phosphate binding site. The active-site Cysteine persulfide intermediate is Cys-328. Cys-328 contributes to the [2Fe-2S] cluster binding site.

This sequence belongs to the class-V pyridoxal-phosphate-dependent aminotransferase family. NifS/IscS subfamily. Homodimer. Forms a heterotetramer with IscU, interacts with other sulfur acceptors. The cofactor is pyridoxal 5'-phosphate.

It localises to the cytoplasm. The catalysed reaction is (sulfur carrier)-H + L-cysteine = (sulfur carrier)-SH + L-alanine. Its pathway is cofactor biosynthesis; iron-sulfur cluster biosynthesis. Functionally, master enzyme that delivers sulfur to a number of partners involved in Fe-S cluster assembly, tRNA modification or cofactor biosynthesis. Catalyzes the removal of elemental sulfur atoms from cysteine to produce alanine. Functions as a sulfur delivery protein for Fe-S cluster synthesis onto IscU, an Fe-S scaffold assembly protein, as well as other S acceptor proteins. The protein is Cysteine desulfurase IscS of Klebsiella pneumoniae (strain 342).